A 158-amino-acid polypeptide reads, in one-letter code: Transcription elongation factor GreA (158 aa).

Positions 47–68 form a coiled coil; it reads AEYDAAKEAQGLLEMRIAKLEE.

Belongs to the GreA/GreB family.

In terms of biological role, necessary for efficient RNA polymerase transcription elongation past template-encoded arresting sites. The arresting sites in DNA have the property of trapping a certain fraction of elongating RNA polymerases that pass through, resulting in locked ternary complexes. Cleavage of the nascent transcript by cleavage factors such as GreA or GreB allows the resumption of elongation from the new 3'terminus. GreA releases sequences of 2 to 3 nucleotides. The polypeptide is Transcription elongation factor GreA (Flavobacterium johnsoniae (strain ATCC 17061 / DSM 2064 / JCM 8514 / BCRC 14874 / CCUG 350202 / NBRC 14942 / NCIMB 11054 / UW101) (Cytophaga johnsonae)).